The chain runs to 635 residues: 1-deoxy-D-xylulose-5-phosphate synthase (635 aa).

Thiamine diphosphate-binding positions include His-79 and 120–122; that span reads GHS. A Mg(2+)-binding site is contributed by Asp-151. Thiamine diphosphate is bound by residues 152-153, Asn-182, Tyr-290, and Glu-372; that span reads GA. Asn-182 is a Mg(2+) binding site.

This sequence belongs to the transketolase family. DXPS subfamily. In terms of assembly, homodimer. Requires Mg(2+) as cofactor. Thiamine diphosphate serves as cofactor.

It catalyses the reaction D-glyceraldehyde 3-phosphate + pyruvate + H(+) = 1-deoxy-D-xylulose 5-phosphate + CO2. It participates in metabolic intermediate biosynthesis; 1-deoxy-D-xylulose 5-phosphate biosynthesis; 1-deoxy-D-xylulose 5-phosphate from D-glyceraldehyde 3-phosphate and pyruvate: step 1/1. Functionally, catalyzes the acyloin condensation reaction between C atoms 2 and 3 of pyruvate and glyceraldehyde 3-phosphate to yield 1-deoxy-D-xylulose-5-phosphate (DXP). The sequence is that of 1-deoxy-D-xylulose-5-phosphate synthase from Stenotrophomonas maltophilia (strain K279a).